The primary structure comprises 385 residues: MPWRLPTGHQLCRLCLLRKPRPALKIKPSSACVTYGTDSQSDKENKRTVEKLSACSVDIRKIRRLKGWVLLEEETYVEEIANILKELGANKTVIASILERCPEAIICSPAAVNTKRKLWQMVCKNEAELVQLIEQFPESFFTVKNQENQKLNVQFFQELGLRNVVISRFLTTASSIFHNPVENNKQMIGVLQESYLNLGGSEANAKVWLLKLLSQNPFIVLHSPRAVGETLKCLQGQGFTDSEVLQLLSKLKGFLFQLQPGSIQNSISFTKTTFECTDYDLRQLVVKCPALLCYPASVLEERIQALLKEGISIAQIRESPMVLELTPQIIQYRIRKLNSLGYGIKDGHLASLNGTKKEFEANFSKMQAKQGRPLFNPVASLKVEE.

Residues 1-35 constitute a mitochondrion transit peptide; that stretch reads MPWRLPTGHQLCRLCLLRKPRPALKIKPSSACVTY.

This sequence belongs to the mTERF family. In terms of assembly, monomer.

Its subcellular location is the mitochondrion matrix. The protein localises to the mitochondrion nucleoid. Functionally, binds mitochondrial DNA and plays a role in the regulation of transcription of mitochondrial mRNA and rRNA species. This Mus musculus (Mouse) protein is Transcription termination factor 2, mitochondrial (Mterf2).